We begin with the raw amino-acid sequence, 236 residues long: Alanyl-tRNA editing protein AlaX-M (236 aa).

Zn(2+) contacts are provided by H101, H105, and H205.

Belongs to the class-II aminoacyl-tRNA synthetase family. Editing domain AlaX-M subfamily. The cofactor is Zn(2+).

The protein resides in the cytoplasm. In terms of biological role, functions in trans to edit the amino acid moiety from incorrectly charged Ser-tRNA(Ala). This Saccharolobus solfataricus (strain ATCC 35092 / DSM 1617 / JCM 11322 / P2) (Sulfolobus solfataricus) protein is Alanyl-tRNA editing protein AlaX-M (alaXM).